A 704-amino-acid polypeptide reads, in one-letter code: Protein kinase C-like 1 (704 aa).

T89 and T139 each carry phosphothreonine; by autocatalysis. 2 Phorbol-ester/DAG-type zinc fingers span residues 165 to 215 and 237 to 287; these read GHQF…IMQC and PHRF…SNLC. T324 is subject to Phosphothreonine; by autocatalysis. Positions 375-634 constitute a Protein kinase domain; sequence FNLLKVLGKG…DGPIRQHCFF (260 aa). ATP is bound by residues 381–389 and K404; that span reads LGKGSFGKV. Residue D499 is the Proton acceptor of the active site. An AGC-kinase C-terminal domain is found at 635-704; it reads RGVDWKRFEN…FSYTNPHFSK (70 aa).

This sequence belongs to the protein kinase superfamily. AGC Ser/Thr protein kinase family. PKC subfamily.

The enzyme catalyses L-seryl-[protein] + ATP = O-phospho-L-seryl-[protein] + ADP + H(+). It catalyses the reaction L-threonyl-[protein] + ATP = O-phospho-L-threonyl-[protein] + ADP + H(+). In terms of biological role, diacylglycerol (DAG)-dependent serine/threonine-protein kinase that phosphorylates a range of cellular proteins. Phosphorylates mlk-1, a component of the JNK pathway. Involved in axon regeneration after injury probably by activating the JNK pathway. Plays a role in resistance to fungal infection and in wound healing by promoting expression of antimicrobial peptide nlp-29 in the epidermis downstream of gpa-12 and plc-3 and upstream of tir-1-p38-like pathway. Probably by regulating neuronal transmission in ALA neurons, regulates the decrease in pharyngeal pumping during the quiescent state that precedes each larval molt, downstream of lin-3 and receptor let-23 and phospholipase plc-3. This is Protein kinase C-like 1 (tpa-1) from Caenorhabditis elegans.